We begin with the raw amino-acid sequence, 464 residues long: 3-isopropylmalate dehydratase large subunit (464 aa).

Cys337, Cys397, and Cys400 together coordinate [4Fe-4S] cluster.

This sequence belongs to the aconitase/IPM isomerase family. LeuC type 1 subfamily. In terms of assembly, heterodimer of LeuC and LeuD. Requires [4Fe-4S] cluster as cofactor.

It carries out the reaction (2R,3S)-3-isopropylmalate = (2S)-2-isopropylmalate. The protein operates within amino-acid biosynthesis; L-leucine biosynthesis; L-leucine from 3-methyl-2-oxobutanoate: step 2/4. Its function is as follows. Catalyzes the isomerization between 2-isopropylmalate and 3-isopropylmalate, via the formation of 2-isopropylmaleate. In Bacillus cereus (strain ATCC 10987 / NRS 248), this protein is 3-isopropylmalate dehydratase large subunit.